A 279-amino-acid chain; its full sequence is Digeranylgeranylglyceryl phosphate synthase (279 aa).

A run of 6 helical transmembrane segments spans residues 27 to 47 (LIAT…VALI), 90 to 110 (FVGG…IAII), 127 to 147 (VLGN…GGAF), 199 to 219 (TGIF…LPFG), 222 to 242 (WGLF…FGAF), and 259 to 279 (TSIL…AAVI).

Belongs to the UbiA prenyltransferase family. DGGGP synthase subfamily. Mg(2+) is required as a cofactor.

It is found in the cell membrane. The enzyme catalyses sn-3-O-(geranylgeranyl)glycerol 1-phosphate + (2E,6E,10E)-geranylgeranyl diphosphate = 2,3-bis-O-(geranylgeranyl)-sn-glycerol 1-phosphate + diphosphate. It participates in membrane lipid metabolism; glycerophospholipid metabolism. In terms of biological role, prenyltransferase that catalyzes the transfer of the geranylgeranyl moiety of geranylgeranyl diphosphate (GGPP) to the C2 hydroxyl of (S)-3-O-geranylgeranylglyceryl phosphate (GGGP). This reaction is the second ether-bond-formation step in the biosynthesis of archaeal membrane lipids. In Methanoculleus marisnigri (strain ATCC 35101 / DSM 1498 / JR1), this protein is Digeranylgeranylglyceryl phosphate synthase.